The primary structure comprises 666 residues: Transmembrane protein 201 (666 aa).

An N-acetylmethionine modification is found at M1. Residues 1 to 213 (MEGVSALLAR…FSSAVKSPVQ (213 aa)) are Nuclear-facing. Residues 214–234 (VILLRALAFLACAFLLTTALY) traverse the membrane as a helical segment. Over 235–297 (GASGHFAPGT…EAWAFGQSHQ (63 aa)) the chain is Perinuclear space. The chain crosses the membrane as a helical span at residues 298 to 318 (TGVVALGLLTCLLAMLLAGRI). Residues 319 to 322 (RLRR) are Nuclear-facing. A helical membrane pass occupies residues 323-343 (IDAFCTCLWALLLGLHLAEQH). Residues 344–356 (LQAASPSWLDTLK) are Perinuclear space-facing. A helical transmembrane segment spans residues 357 to 374 (FSTTSLCCLVGFTAAVAT). Residues 375–644 (RKATGPRRFR…GRFGPSLVRG (270 aa)) are Nuclear-facing. Phosphoserine is present on residues S441, S444, S450, S454, S466, S477, and S480. Positions 502–581 (PLPSPAPSVA…PPHVPRKPPL (80 aa)) are disordered. The span at 508 to 520 (PSVAGSVASSSGS) shows a compositional bias: low complexity. S529 is modified (phosphoserine). Residues 645 to 665 (LLAVSLAANALFTSVFLYQSL) form a helical membrane-spanning segment. A topological domain (perinuclear space) is located at residue R666.

The protein belongs to the TMEM201 family. Interacts with SUN2 and LMNA. May bind to Ran GTPase; has a greater affinity for Ran-GTP over Ran-GDP. As to quaternary structure, interacts with EMD.

Its subcellular location is the nucleus inner membrane. It localises to the cytoplasm. The protein localises to the cytoskeleton. The protein resides in the spindle pole. Functionally, critical regulator of angiogenesis and endothelial cell (EC) migration. Promotes the migration of endothelial cells, which is essential for angiogenesis. Interacts with the linker of nucleoskeleton and cytoskeleton (LINC) complex, which plays a vital role in connecting the cell's cytoskeleton to the nuclear envelope. This interaction is essential for maintaining cellular structure and facilitating the movement of endothelial cells, which is critical for proper vascular development. Involved in nuclear movement during fibroblast polarization and migration. Overexpression can recruit Ran GTPase to the nuclear periphery. May define a distinct membrane domain in the vicinity of the mitotic spindle. Involved in the organization of the nuclear envelope implicating EMD, SUN1 and A-type lamina. This is Transmembrane protein 201 (TMEM201) from Homo sapiens (Human).